Here is a 248-residue protein sequence, read N- to C-terminus: Putative TrmH family tRNA/rRNA methyltransferase (248 aa).

Positions 196, 216, and 225 each coordinate S-adenosyl-L-methionine.

The protein belongs to the class IV-like SAM-binding methyltransferase superfamily. RNA methyltransferase TrmH family.

In Staphylococcus aureus (strain COL), this protein is Putative TrmH family tRNA/rRNA methyltransferase.